The primary structure comprises 132 residues: MGKDTIADIITSIRNAQMAKKGTVRIASTNLTENVVKILLREGFIENVRKHRESNKDFLVLTLRHRRTRKGIYRTILKRISRPGLRIYSNYQGIPKILGGIGIVIVSTSRGIMTDREARLQGIGGEMLCYIC.

Belongs to the universal ribosomal protein uS8 family. In terms of assembly, part of the 30S ribosomal subunit.

It is found in the plastid. It localises to the chloroplast. In terms of biological role, one of the primary rRNA binding proteins, it binds directly to 16S rRNA central domain where it helps coordinate assembly of the platform of the 30S subunit. This is Small ribosomal subunit protein uS8c (rps8) from Acorus calamus (Sweet flag).